Here is a 280-residue protein sequence, read N- to C-terminus: MINNLKTFILLASLTALLVVIGGLLGGSTGMLVALLFAGIMNFSAYWYSDTLVLKMYNAEPLSNNHFVYHIVSELAHRAGTSVPKVYLINNSTPNAFATGRNPENASIAVTTGLLDRLTQEEITGVLAHELAHVIHRDTLINVVSATIAGAISGIANMFMWLSMFGHNSNNEEGVHPVVGMIMMIVAPLAAGLIQMAISRSREFEADAGGARISGNPQWLASALLKLDQANHEQYFDEAETHPATAHLFIINPLNGEKLANLFSTHPSTAERVARLRAMY.

2 consecutive transmembrane segments (helical) span residues 7–26 (TFILLASLTALLVVIGGLLG) and 30–49 (GMLVALLFAGIMNFSAYWYS). Residue His-129 participates in Zn(2+) binding. Residue Glu-130 is part of the active site. Zn(2+) is bound at residue His-133. 2 consecutive transmembrane segments (helical) span residues 146–166 (ATIAGAISGIANMFMWLSMFG) and 178–198 (VVGMIMMIVAPLAAGLIQMAI). Glu-203 is a binding site for Zn(2+).

It belongs to the peptidase M48B family. The cofactor is Zn(2+).

Its subcellular location is the cell inner membrane. In Legionella pneumophila (strain Corby), this protein is Protease HtpX.